The sequence spans 298 residues: ADP/ATP translocase 3 (298 aa).

Residue methionine 1 is modified to N-acetylmethionine. The Mitochondrial intermembrane segment spans residues 1–7 (MTEQAIS). Position 2 is an N-acetylthreonine; in ADP/ATP translocase 3, N-terminally processed (threonine 2). Residues 6–98 (ISFAKDFLAG…FAFKDKYKQI (93 aa)) form a Solcar 1 repeat. A helical transmembrane segment spans residues 8 to 37 (FAKDFLAGGIAAAISKTAVAPIERVKLLLQ). Over 38-74 (VQHASKQIAADKQYKGIVDCIVRIPKEQGVLSFWRGN) the chain is Mitochondrial matrix. Lysine 52 is subject to N6,N6,N6-trimethyllysine. Residues 75–99 (LANVIRYFPTQALNFAFKDKYKQIF) traverse the membrane as a helical segment. Residues arginine 80 and lysine 92 each coordinate ADP. The Mitochondrial intermembrane segment spans residues 100-109 (LGGVDKHTQF). Residue lysine 105 is modified to N6-acetyllysine. Residues 110-130 (WRYFAGNLASGGAAGATSLCF) traverse the membrane as a helical segment. Solcar repeat units follow at residues 111–201 (RYFA…AKGM) and 212–297 (VSWM…LKKV). Residues 131–178 (VYPLDFARTRLAADVGKSGTEREFRGLGDCLVKITKSDGIRGLYQGFS) are Mitochondrial matrix-facing. The chain crosses the membrane as a helical span at residues 179–199 (VSVQGIIIYRAAYFGVYDTAK). Residues 200–210 (GMLPDPKNTHI) lie on the Mitochondrial intermembrane side of the membrane. A helical membrane pass occupies residues 211 to 231 (VVSWMIAQTVTAVAGVVSYPF). The Mitochondrial matrix segment spans residues 232–273 (DTVRRRMMMQSGRKGADIMYTGTVDCWRKIFRDEGGKAFFKG). Arginine 235 serves as a coordination point for ADP. The segment at 235-240 (RRRMMM) is important for transport activity. The Nucleotide carrier signature motif signature appears at 235–240 (RRRMMM). Lysine 268 bears the N6-acetyllysine mark. Residues 274-291 (AWSNVLRGMGGAFVLVLY) traverse the membrane as a helical segment. Residues 292–298 (DELKKVI) are Mitochondrial intermembrane-facing.

The protein belongs to the mitochondrial carrier (TC 2.A.29) family. In terms of assembly, monomer. Found in a complex with ARL2, ARL2BP and SLC25A6/ANT3. As to quaternary structure, (Microbial infection) Interacts with influenza A virus PB1-F2 protein. (Microbial infection) Interacts with HIV-1 Vpr. In terms of processing, trimethylated by ANTKMT at Lys-52. As to expression, expressed in erythrocytes (at protein level).

Its subcellular location is the mitochondrion inner membrane. The protein localises to the membrane. The catalysed reaction is ADP(in) + ATP(out) = ADP(out) + ATP(in). It catalyses the reaction H(+)(in) = H(+)(out). The matrix-open state (m-state) is inhibited by the membrane-permeable bongkrekic acid (BKA). The cytoplasmic-open state (c-state) is inhibited by the membrane-impermeable toxic inhibitor carboxyatractyloside (CATR). Proton transporter activity is inhibited by ADP:ATP antiporter activity. ADP:ATP antiporter that mediates import of ADP into the mitochondrial matrix for ATP synthesis, and export of ATP out to fuel the cell. Cycles between the cytoplasmic-open state (c-state) and the matrix-open state (m-state): operates by the alternating access mechanism with a single substrate-binding site intermittently exposed to either the cytosolic (c-state) or matrix (m-state) side of the inner mitochondrial membrane. In addition to its ADP:ATP antiporter activity, also involved in mitochondrial uncoupling and mitochondrial permeability transition pore (mPTP) activity. Plays a role in mitochondrial uncoupling by acting as a proton transporter: proton transport uncouples the proton flows via the electron transport chain and ATP synthase to reduce the efficiency of ATP production and cause mitochondrial thermogenesis. Proton transporter activity is inhibited by ADP:ATP antiporter activity, suggesting that SLC25A6/ANT3 acts as a master regulator of mitochondrial energy output by maintaining a delicate balance between ATP production (ADP:ATP antiporter activity) and thermogenesis (proton transporter activity). Proton transporter activity requires free fatty acids as cofactor, but does not transport it. Also plays a key role in mPTP opening, a non-specific pore that enables free passage of the mitochondrial membranes to solutes of up to 1.5 kDa, and which contributes to cell death. It is however unclear if SLC25A6/ANT3 constitutes a pore-forming component of mPTP or regulates it. The sequence is that of ADP/ATP translocase 3 from Homo sapiens (Human).